A 497-amino-acid polypeptide reads, in one-letter code: Cytochrome P450 26A1 (497 aa).

Cys442 serves as a coordination point for heme.

It belongs to the cytochrome P450 family. The cofactor is heme. In terms of tissue distribution, expressed in most fetal and adult tissues with highest levels in adult liver, heart, pituitary gland, adrenal gland, placenta and regions of the brain. Expressed at high levels in lung, pancreas, skin and uterus (at protein level). Lower expression level is detected in spleen, kidney, intestine and adipose tissue (at protein level).

It localises to the endoplasmic reticulum membrane. Its subcellular location is the microsome membrane. It carries out the reaction all-trans-retinoate + reduced [NADPH--hemoprotein reductase] + O2 = all-trans-(4S)-hydroxyretinoate + oxidized [NADPH--hemoprotein reductase] + H2O + H(+). The catalysed reaction is all-trans-(4S)-hydroxyretinoate + reduced [NADPH--hemoprotein reductase] + O2 = all-trans-(4S,16)-dihydroxyretinoate + oxidized [NADPH--hemoprotein reductase] + H2O + H(+). It catalyses the reaction all-trans-retinoate + reduced [NADPH--hemoprotein reductase] + O2 = all-trans-18-hydroxyretinoate + oxidized [NADPH--hemoprotein reductase] + H2O + H(+). A cytochrome P450 monooxygenase involved in the metabolism of retinoates (RAs), the active metabolites of vitamin A, and critical signaling molecules in animals. RAs exist as at least four different isomers: all-trans-RA (atRA), 9-cis-RA, 13-cis-RA, and 9,13-dicis-RA, where atRA is considered to be the biologically active isomer, although 9-cis-RA and 13-cis-RA also have activity. Catalyzes the hydroxylation of atRA primarily at C-4 and C-18, thereby contributing to the regulation of atRA homeostasis and signaling. Hydroxylation of atRA limits its biological activity and initiates a degradative process leading to its eventual elimination. Involved in the convertion of atRA to all-trans-4-oxo-RA. Able to metabolize other RAs such as 9-cis, 13-cis and 9,13-di-cis RA. Can oxidize all-trans-13,14-dihydroretinoate (DRA) to metabolites which could include all-trans-4-oxo-DRA, all-trans-4-hydroxy-DRA, all-trans-5,8-epoxy-DRA, and all-trans-18-hydroxy-DRA. May play a role in the oxidative metabolism of xenobiotics such as tazarotenic acid. The protein is Cytochrome P450 26A1 of Homo sapiens (Human).